The chain runs to 69 residues: Metallothionein-like protein CRS5 (69 aa).

The protein belongs to the metallothionein superfamily. Type 13 family.

Functionally, critical role in copper (specific) homeostasis and detoxification. May protect by directly chelating and sequestering copper ions. This Saccharomyces cerevisiae (strain RM11-1a) (Baker's yeast) protein is Metallothionein-like protein CRS5 (CRS5).